The following is a 407-amino-acid chain: Imidazolonepropionase (407 aa).

Residues His-74 and His-76 each coordinate Fe(3+). The Zn(2+) site is built by His-74 and His-76. Residues Arg-83, Tyr-146, and His-179 each contribute to the 4-imidazolone-5-propanoate site. Tyr-146 serves as a coordination point for N-formimidoyl-L-glutamate. His-244 lines the Fe(3+) pocket. His-244 contributes to the Zn(2+) binding site. Gln-247 is a binding site for 4-imidazolone-5-propanoate. Asp-319 serves as a coordination point for Fe(3+). Position 319 (Asp-319) interacts with Zn(2+). N-formimidoyl-L-glutamate-binding residues include Asn-321 and Gly-323. Residue Thr-324 participates in 4-imidazolone-5-propanoate binding.

The protein belongs to the metallo-dependent hydrolases superfamily. HutI family. The cofactor is Zn(2+). Fe(3+) is required as a cofactor.

The protein localises to the cytoplasm. The enzyme catalyses 4-imidazolone-5-propanoate + H2O = N-formimidoyl-L-glutamate. The protein operates within amino-acid degradation; L-histidine degradation into L-glutamate; N-formimidoyl-L-glutamate from L-histidine: step 3/3. Catalyzes the hydrolytic cleavage of the carbon-nitrogen bond in imidazolone-5-propanoate to yield N-formimidoyl-L-glutamate. It is the third step in the universal histidine degradation pathway. The protein is Imidazolonepropionase of Salmonella agona (strain SL483).